Here is a 162-residue protein sequence, read N- to C-terminus: ATP synthase subunit delta, mitochondrial (162 aa).

The N-terminal 24 residues, 1–24, are a transit peptide targeting the mitochondrion; that stretch reads MFSVARTAIRGAARPAVRIARRGY.

In terms of assembly, F-type ATP synthases have 2 components, the catalytic core F(1) and the membrane-embedded component F(0), linked together by a central stalk and a peripheral stalk. The central stalk, also called rotor shaft, is often seen as part of F(1). The peripheral stalk is seen as part of F(0). F(0) contains the membrane channel next to the rotor. F-type ATP synthases form dimers but each monomer functions independently in ATP generation. The dimer consists of 17 different polypeptides: ATP1 (subunit alpha, 3 molecules per monomer, part of F(1)), ATP2 (subunit beta, 3 copies per monomer, part of F(1)), ATP3 (subunit gamma, part of the central stalk), ATP4 (subunit b, part of the peripheral stalk), ATP5/OSCP (subunit 5/OSCP, part of the peripheral stalk), ATP6 (subunit a, part of the peripheral stalk), ATP7 (subunit d, part of the peripheral stalk), ATP8 (subunit 8, part of the peripheral stalk), OLI1 (subunit c, part of the rotor, 10 molecules per monomer), ATP14 (subunit h, part of the peripheral stalk), ATP15 (subunit epsilon, part of the central stalk), ATP16 (subunit delta, part of the central stalk), ATP17 (subunit f, part of the peripheral stalk), ATP18 (subunit i/j, part of the peripheral stalk), ATP19 (subunit k, dimer-specific, at interface between monomers), ATP20 (subunit g, at interface between monomers), TIM11 (subunit e, at interface between monomers).

It is found in the mitochondrion inner membrane. Mitochondrial membrane ATP synthase (F(1)F(0) ATP synthase or Complex V) produces ATP from ADP in the presence of a proton gradient across the membrane which is generated by electron transport complexes of the respiratory chain. F-type ATP synthases consist of two structural domains, F(1) - containing the extramembraneous catalytic core, and F(0) - containing the membrane proton channel, linked together by a central stalk and a peripheral stalk. During catalysis, ATP synthesis in the catalytic domain of F(1) is coupled via a rotary mechanism of the central stalk subunits to proton translocation. Part of the complex F(1) domain and the central stalk which is part of the complex rotary element. Rotation of the central stalk against the surrounding alpha/ATP1(3)beta/ATP2(3) subunits leads to hydrolysis of ATP in three separate catalytic sites on the beta/ATP2 subunits. The chain is ATP synthase subunit delta, mitochondrial from Yarrowia lipolytica (strain CLIB 122 / E 150) (Yeast).